We begin with the raw amino-acid sequence, 483 residues long: UDP-N-acetylmuramate--L-alanine ligase (483 aa).

Residue 122–128 (GSHGKTT) coordinates ATP.

This sequence belongs to the MurCDEF family.

It localises to the cytoplasm. It carries out the reaction UDP-N-acetyl-alpha-D-muramate + L-alanine + ATP = UDP-N-acetyl-alpha-D-muramoyl-L-alanine + ADP + phosphate + H(+). It participates in cell wall biogenesis; peptidoglycan biosynthesis. Cell wall formation. In Synechococcus sp. (strain CC9311), this protein is UDP-N-acetylmuramate--L-alanine ligase.